The following is a 152-amino-acid chain: Nucleoside diphosphate kinase B (152 aa).

The segment at 1 to 66 (MAHAERTFIA…DRPFFPGLVK (66 aa)) is interaction with AKAP13. 6 residues coordinate ATP: K12, F60, R88, T94, R105, and N115. H118 (pros-phosphohistidine intermediate) is an active-site residue.

Belongs to the NDK family. As to quaternary structure, hexamer of two different chains: An and B (A6, A5B, A4B2, A3B3, A2B4, AB5, B6). Interacts with CAPN8. Interacts with AKAP13. Interacts with ITGB1BP1 (via C-terminal domain region). Interacts with BCL2L10. Mg(2+) serves as cofactor.

The protein resides in the cytoplasm. It is found in the cell projection. Its subcellular location is the lamellipodium. It localises to the ruffle. The protein localises to the nucleus. The enzyme catalyses a 2'-deoxyribonucleoside 5'-diphosphate + ATP = a 2'-deoxyribonucleoside 5'-triphosphate + ADP. It catalyses the reaction a ribonucleoside 5'-diphosphate + ATP = a ribonucleoside 5'-triphosphate + ADP. The catalysed reaction is ATP + protein L-histidine = ADP + protein N-phospho-L-histidine.. Its function is as follows. Major role in the synthesis of nucleoside triphosphates other than ATP. The ATP gamma phosphate is transferred to the NDP beta phosphate via a ping-pong mechanism, using a phosphorylated active-site intermediate. Negatively regulates Rho activity by interacting with AKAP13/LBC. Acts as a transcriptional activator of the MYC gene; binds DNA non-specifically. Binds to both single-stranded guanine- and cytosine-rich strands within the nuclease hypersensitive element (NHE) III(1) region of the MYC gene promoter. Does not bind to duplex NHE III(1). Has G-quadruplex (G4) DNA-binding activity, which is independent of its nucleotide-binding and kinase activity. Binds both folded and unfolded G4 with similar low nanomolar affinities. Stabilizes folded G4s regardless of whether they are prefolded or not. Exhibits histidine protein kinase activity. This chain is Nucleoside diphosphate kinase B (NME2), found in Bos taurus (Bovine).